Here is a 412-residue protein sequence, read N- to C-terminus: MQSWSAPAIPVVPGRGPALRLFDSADRQVRPVTPGPTATMYVCGITPYDATHLGHAATYLTFDLVHRLWLDAGHTVQYVQNVTDVDDPLFERAERDGIDWRTLGDRETQLFREDMAALRVLPPHDYVAATDAIAEVVEMVEKLLASGAAYIVEDAEYPDVYFRADATAQFGYESGYDRDTMLTLFAERGGDPDRPGKSDQLDALLWRAERPGEPSWPSPFGRGRPGWHVECSAIALTRIGTGLDIQGGGSDLIFPHHEYSAAHAESVTGERRFARHYVHTGMIGWDGHKMSKSRGNLVLVSQLRAQGVDPSAIRLGLFSGHYREDRFWSNEVLDEANARLARWRSATALPEAPDATDVIARVRQYLADDLDTPKALAALDGWCTDALSYGGHDTESPRLVATTVDALLGVDL.

Residue C43 coordinates Zn(2+). L-cysteinyl-5'-AMP contacts are provided by residues 43–46, T58, and 81–83; these read CGIT and NVT. The short motif at 45-55 is the 'HIGH' region element; the sequence is ITPYDATHLGH. A 'ERGGDP' region motif is present at residues 187-192; it reads ERGGDP. Residue W227 participates in L-cysteinyl-5'-AMP binding. C231 contributes to the Zn(2+) binding site. An L-cysteinyl-5'-AMP-binding site is contributed by 249 to 251; it reads GSD. Zn(2+) is bound at residue H256. I283 contributes to the L-cysteinyl-5'-AMP binding site. Positions 289–293 match the 'KMSKS' region motif; sequence KMSKS.

Belongs to the class-I aminoacyl-tRNA synthetase family. MshC subfamily. As to quaternary structure, monomer. Zn(2+) serves as cofactor.

It catalyses the reaction 1D-myo-inositol 2-amino-2-deoxy-alpha-D-glucopyranoside + L-cysteine + ATP = 1D-myo-inositol 2-(L-cysteinylamino)-2-deoxy-alpha-D-glucopyranoside + AMP + diphosphate + H(+). Catalyzes the ATP-dependent condensation of GlcN-Ins and L-cysteine to form L-Cys-GlcN-Ins. The protein is L-cysteine:1D-myo-inositol 2-amino-2-deoxy-alpha-D-glucopyranoside ligase (mshC) of Mycolicibacterium smegmatis (strain ATCC 700084 / mc(2)155) (Mycobacterium smegmatis).